The chain runs to 285 residues: Protein phosphatase 1 regulatory subunit 3C (285 aa).

The short motif at K72–F75 is the PP1-binding motif element. In terms of domain architecture, CBM21 spans R133–V241.

In terms of assembly, interacts with PPP1CC catalytic subunit of PP1 and associates with glycogen. Forms complexes with glycogen phosphorylase, glycogen synthase and phosphorylase kinase which is necessary for its regulation of PP1 activity. In terms of tissue distribution, ubiquitously expressed in the examined tissues including brain, muscle, liver and spleen under normoxic condition. Its expression is higher in insulin sensitive tissues (liver and muscle) than in the brain and spleen. Significantly increased expression in the liver and muscle under short-term (1-12 hours) hypoxia exposure. Significantly increased expression after long-term (natural) hypoxia exposure in liver and spleen. No significant differences in expression in brain for any time periods.

Functionally, acts as a glycogen-targeting subunit for PP1 and regulates its activity. Activates glycogen synthase, reduces glycogen phosphorylase activity and limits glycogen breakdown. The sequence is that of Protein phosphatase 1 regulatory subunit 3C from Clarias batrachus (Walking catfish).